A 150-amino-acid polypeptide reads, in one-letter code: MSRRKVRDTKEETVTLGPAVSDGEHVFGVARIFASFNDTFIHVTDLSGRETLVRITGGMKVKADRDESSPYAAMLAAQDVATRCKELGITALHIKLRATGGNKTKTPGRGAQSALRALARSGMKIGRIEDVTPIPSDSTRRKSGRRGRRL.

Positions 130–150 (DVTPIPSDSTRRKSGRRGRRL) are disordered. Over residues 141-150 (RKSGRRGRRL) the composition is skewed to basic residues.

It belongs to the universal ribosomal protein uS11 family.

The polypeptide is Small ribosomal subunit protein uS11 (RPS14) (Lupinus luteus (European yellow lupine)).